Consider the following 159-residue polypeptide: Ribosomal RNA large subunit methyltransferase H (159 aa).

Residues L76, G108, and 127–132 (FGLLTL) contribute to the S-adenosyl-L-methionine site.

It belongs to the RNA methyltransferase RlmH family. In terms of assembly, homodimer.

The protein localises to the cytoplasm. The catalysed reaction is pseudouridine(1915) in 23S rRNA + S-adenosyl-L-methionine = N(3)-methylpseudouridine(1915) in 23S rRNA + S-adenosyl-L-homocysteine + H(+). Its function is as follows. Specifically methylates the pseudouridine at position 1915 (m3Psi1915) in 23S rRNA. This Streptococcus agalactiae serotype Ia (strain ATCC 27591 / A909 / CDC SS700) protein is Ribosomal RNA large subunit methyltransferase H.